We begin with the raw amino-acid sequence, 501 residues long: 2-isopropylmalate synthase (501 aa).

Positions 7–269 (VRIFDTTLRD…QTQIKTEEIA (263 aa)) constitute a Pyruvate carboxyltransferase domain. Mn(2+) contacts are provided by D16, H204, H206, and N240. The tract at residues 394–501 (QLEGFTVSTG…RAYISALNRL (108 aa)) is regulatory domain.

Belongs to the alpha-IPM synthase/homocitrate synthase family. LeuA type 1 subfamily. As to quaternary structure, homodimer. It depends on Mn(2+) as a cofactor.

Its subcellular location is the cytoplasm. It catalyses the reaction 3-methyl-2-oxobutanoate + acetyl-CoA + H2O = (2S)-2-isopropylmalate + CoA + H(+). It functions in the pathway amino-acid biosynthesis; L-leucine biosynthesis; L-leucine from 3-methyl-2-oxobutanoate: step 1/4. Functionally, catalyzes the condensation of the acetyl group of acetyl-CoA with 3-methyl-2-oxobutanoate (2-ketoisovalerate) to form 3-carboxy-3-hydroxy-4-methylpentanoate (2-isopropylmalate). This chain is 2-isopropylmalate synthase, found in Leptospira interrogans serogroup Icterohaemorrhagiae serovar copenhageni (strain Fiocruz L1-130).